The chain runs to 365 residues: Succinyl-diaminopimelate desuccinylase (365 aa).

His65 provides a ligand contact to Zn(2+). Residue Asp67 is part of the active site. Position 96 (Asp96) interacts with Zn(2+). The active-site Proton acceptor is Glu126. Zn(2+) contacts are provided by Glu127, Glu155, and His340.

It belongs to the peptidase M20A family. DapE subfamily. Homodimer. It depends on Zn(2+) as a cofactor. Requires Co(2+) as cofactor.

The catalysed reaction is N-succinyl-(2S,6S)-2,6-diaminopimelate + H2O = (2S,6S)-2,6-diaminopimelate + succinate. It functions in the pathway amino-acid biosynthesis; L-lysine biosynthesis via DAP pathway; LL-2,6-diaminopimelate from (S)-tetrahydrodipicolinate (succinylase route): step 3/3. In terms of biological role, catalyzes the hydrolysis of N-succinyl-L,L-diaminopimelic acid (SDAP), forming succinate and LL-2,6-diaminopimelate (DAP), an intermediate involved in the bacterial biosynthesis of lysine and meso-diaminopimelic acid, an essential component of bacterial cell walls. The polypeptide is Succinyl-diaminopimelate desuccinylase (Campylobacter jejuni subsp. jejuni serotype O:23/36 (strain 81-176)).